We begin with the raw amino-acid sequence, 143 residues long: Large ribosomal subunit protein uL11 (143 aa).

The protein belongs to the universal ribosomal protein uL11 family. As to quaternary structure, part of the ribosomal stalk of the 50S ribosomal subunit. Interacts with L10 and the large rRNA to form the base of the stalk. L10 forms an elongated spine to which L12 dimers bind in a sequential fashion forming a multimeric L10(L12)X complex. Post-translationally, one or more lysine residues are methylated.

In terms of biological role, forms part of the ribosomal stalk which helps the ribosome interact with GTP-bound translation factors. This chain is Large ribosomal subunit protein uL11, found in Thiobacillus denitrificans (strain ATCC 25259 / T1).